Here is a 232-residue protein sequence, read N- to C-terminus: Glycerol-3-phosphate acyltransferase (232 aa).

6 helical membrane passes run 4–24 (FLAI…IIAG), 56–76 (VVTL…VGFF), 90–110 (IALS…TVFA), 124–144 (MLIG…LLAV), 152–172 (VGSI…KYVF), and 191–211 (SLDY…IYTH).

The protein belongs to the PlsY family. In terms of assembly, probably interacts with PlsX.

The protein resides in the cell inner membrane. The catalysed reaction is an acyl phosphate + sn-glycerol 3-phosphate = a 1-acyl-sn-glycero-3-phosphate + phosphate. It functions in the pathway lipid metabolism; phospholipid metabolism. Catalyzes the transfer of an acyl group from acyl-phosphate (acyl-PO(4)) to glycerol-3-phosphate (G3P) to form lysophosphatidic acid (LPA). This enzyme utilizes acyl-phosphate as fatty acyl donor, but not acyl-CoA or acyl-ACP. This is Glycerol-3-phosphate acyltransferase from Chlorobaculum tepidum (strain ATCC 49652 / DSM 12025 / NBRC 103806 / TLS) (Chlorobium tepidum).